A 416-amino-acid polypeptide reads, in one-letter code: Glutamyl-tRNA reductase 1 (416 aa).

Substrate contacts are provided by residues 57-60 (TCNR), Ser113, 118-120 (DFE), and Gln124. Catalysis depends on Cys58, which acts as the Nucleophile. 193-198 (GTGKIG) provides a ligand contact to NADP(+).

It belongs to the glutamyl-tRNA reductase family. In terms of assembly, homodimer.

It carries out the reaction (S)-4-amino-5-oxopentanoate + tRNA(Glu) + NADP(+) = L-glutamyl-tRNA(Glu) + NADPH + H(+). It functions in the pathway porphyrin-containing compound metabolism; protoporphyrin-IX biosynthesis; 5-aminolevulinate from L-glutamyl-tRNA(Glu): step 1/2. Its function is as follows. Catalyzes the NADPH-dependent reduction of glutamyl-tRNA(Glu) to glutamate 1-semialdehyde (GSA). This Flavobacterium johnsoniae (strain ATCC 17061 / DSM 2064 / JCM 8514 / BCRC 14874 / CCUG 350202 / NBRC 14942 / NCIMB 11054 / UW101) (Cytophaga johnsonae) protein is Glutamyl-tRNA reductase 1.